The chain runs to 663 residues: DNA ligase (663 aa).

NAD(+) contacts are provided by residues 34–38 (DYEYD), 83–84 (SL), and glutamate 114. Lysine 116 acts as the N6-AMP-lysine intermediate in catalysis. 4 residues coordinate NAD(+): arginine 137, glutamate 171, lysine 286, and lysine 310. Zn(2+) contacts are provided by cysteine 404, cysteine 407, cysteine 422, and cysteine 427. Residues 585–663 (TVESPLTGKN…ADEFIKLANG (79 aa)) form the BRCT domain.

This sequence belongs to the NAD-dependent DNA ligase family. LigA subfamily. Mg(2+) serves as cofactor. It depends on Mn(2+) as a cofactor.

It catalyses the reaction NAD(+) + (deoxyribonucleotide)n-3'-hydroxyl + 5'-phospho-(deoxyribonucleotide)m = (deoxyribonucleotide)n+m + AMP + beta-nicotinamide D-nucleotide.. Functionally, DNA ligase that catalyzes the formation of phosphodiester linkages between 5'-phosphoryl and 3'-hydroxyl groups in double-stranded DNA using NAD as a coenzyme and as the energy source for the reaction. It is essential for DNA replication and repair of damaged DNA. The polypeptide is DNA ligase (Brachyspira hyodysenteriae (strain ATCC 49526 / WA1)).